The following is a 460-amino-acid chain: Light-independent protochlorophyllide reductase subunit N (460 aa).

[4Fe-4S] cluster contacts are provided by Cys-22, Cys-47, and Cys-107.

The protein belongs to the BchN/ChlN family. Protochlorophyllide reductase is composed of three subunits; ChlL, ChlN and ChlB. Forms a heterotetramer of two ChlB and two ChlN subunits. It depends on [4Fe-4S] cluster as a cofactor.

The protein resides in the plastid. It is found in the cyanelle. The enzyme catalyses chlorophyllide a + oxidized 2[4Fe-4S]-[ferredoxin] + 2 ADP + 2 phosphate = protochlorophyllide a + reduced 2[4Fe-4S]-[ferredoxin] + 2 ATP + 2 H2O. It participates in porphyrin-containing compound metabolism; chlorophyll biosynthesis (light-independent). Functionally, component of the dark-operative protochlorophyllide reductase (DPOR) that uses Mg-ATP and reduced ferredoxin to reduce ring D of protochlorophyllide (Pchlide) to form chlorophyllide a (Chlide). This reaction is light-independent. The NB-protein (ChlN-ChlB) is the catalytic component of the complex. This Cyanophora paradoxa protein is Light-independent protochlorophyllide reductase subunit N.